Here is a 585-residue protein sequence, read N- to C-terminus: Arginine--tRNA ligase (585 aa).

The 'HIGH' region signature appears at 131-141 (ANPTGPMHVGH).

Belongs to the class-I aminoacyl-tRNA synthetase family. Monomer.

The protein localises to the cytoplasm. It carries out the reaction tRNA(Arg) + L-arginine + ATP = L-arginyl-tRNA(Arg) + AMP + diphosphate. This chain is Arginine--tRNA ligase, found in Bartonella bacilliformis (strain ATCC 35685 / KC583 / Herrer 020/F12,63).